The sequence spans 412 residues: Phosphoglycerate kinase (412 aa).

Substrate contacts are provided by residues 24-26 (DLN), Arg-44, 67-70 (HLGR), Arg-126, and Arg-170. Residues Lys-220, Gly-308, Glu-339, and 368–371 (GGDS) contribute to the ATP site.

The protein belongs to the phosphoglycerate kinase family. Monomer.

The protein resides in the cytoplasm. The catalysed reaction is (2R)-3-phosphoglycerate + ATP = (2R)-3-phospho-glyceroyl phosphate + ADP. The protein operates within carbohydrate degradation; glycolysis; pyruvate from D-glyceraldehyde 3-phosphate: step 2/5. In Mycobacteroides abscessus (strain ATCC 19977 / DSM 44196 / CCUG 20993 / CIP 104536 / JCM 13569 / NCTC 13031 / TMC 1543 / L948) (Mycobacterium abscessus), this protein is Phosphoglycerate kinase.